The primary structure comprises 437 residues: tRNA-2-methylthio-N(6)-dimethylallyladenosine synthase (437 aa).

In terms of domain architecture, MTTase N-terminal spans 1–117; sequence MKFYIKTFGC…LPNLLEEAKS (117 aa). Residues Cys10, Cys46, Cys80, Cys156, Cys160, and Cys163 each coordinate [4Fe-4S] cluster. Positions 142–371 constitute a Radical SAM core domain; sequence RENKYTAFVT…INLQKDITFK (230 aa). The 62-residue stretch at 374–435 folds into the TRAM domain; sequence LEYQDKIVEI…RFSLEGSIIG (62 aa).

This sequence belongs to the methylthiotransferase family. MiaB subfamily. Monomer. It depends on [4Fe-4S] cluster as a cofactor.

Its subcellular location is the cytoplasm. The catalysed reaction is N(6)-dimethylallyladenosine(37) in tRNA + (sulfur carrier)-SH + AH2 + 2 S-adenosyl-L-methionine = 2-methylsulfanyl-N(6)-dimethylallyladenosine(37) in tRNA + (sulfur carrier)-H + 5'-deoxyadenosine + L-methionine + A + S-adenosyl-L-homocysteine + 2 H(+). Functionally, catalyzes the methylthiolation of N6-(dimethylallyl)adenosine (i(6)A), leading to the formation of 2-methylthio-N6-(dimethylallyl)adenosine (ms(2)i(6)A) at position 37 in tRNAs that read codons beginning with uridine. This chain is tRNA-2-methylthio-N(6)-dimethylallyladenosine synthase, found in Sulfurihydrogenibium sp. (strain YO3AOP1).